A 131-amino-acid polypeptide reads, in one-letter code: Probable ATP synthase subunit g 2, mitochondrial (131 aa).

It belongs to the ATPase g subunit family. In terms of assembly, subunit of the F-type ATPase which has 2 components, CF(1) - the catalytic core - and CF(0) - the membrane proton channel.

It is found in the mitochondrion membrane. Mitochondrial membrane ATP synthase (F(1)F(0) ATP synthase or Complex V) produces ATP from ADP in the presence of a proton gradient across the membrane which is generated by electron transport complexes of the respiratory chain. F-type ATPases consist of two structural domains, F(1) - containing the extramembraneous catalytic core, and F(0) - containing the membrane proton channel, linked together by a central stalk and a peripheral stalk. During catalysis, ATP synthesis in the catalytic domain of F(1) is coupled via a rotary mechanism of the central stalk subunits to proton translocation. Part of the complex F(0) domain. Minor subunit located with subunit a in the membrane. The chain is Probable ATP synthase subunit g 2, mitochondrial from Caenorhabditis elegans.